A 299-amino-acid polypeptide reads, in one-letter code: Cysteine synthase B (299 aa).

N6-(pyridoxal phosphate)lysine is present on K40. Residues N70, 174 to 178, and S261 contribute to the pyridoxal 5'-phosphate site; that span reads GTGGT.

The protein belongs to the cysteine synthase/cystathionine beta-synthase family. Pyridoxal 5'-phosphate is required as a cofactor.

The enzyme catalyses O-acetyl-L-serine + hydrogen sulfide = L-cysteine + acetate. It participates in amino-acid biosynthesis; L-cysteine biosynthesis; L-cysteine from L-serine: step 2/2. This is Cysteine synthase B (cysM) from Campylobacter jejuni subsp. jejuni serotype O:2 (strain ATCC 700819 / NCTC 11168).